Reading from the N-terminus, the 150-residue chain is D-aminoacyl-tRNA deacylase (150 aa).

A Gly-cisPro motif, important for rejection of L-amino acids motif is present at residues Gly138–Pro139.

Belongs to the DTD family. Homodimer.

The protein resides in the cytoplasm. It catalyses the reaction glycyl-tRNA(Ala) + H2O = tRNA(Ala) + glycine + H(+). The enzyme catalyses a D-aminoacyl-tRNA + H2O = a tRNA + a D-alpha-amino acid + H(+). An aminoacyl-tRNA editing enzyme that deacylates mischarged D-aminoacyl-tRNAs. Also deacylates mischarged glycyl-tRNA(Ala), protecting cells against glycine mischarging by AlaRS. Acts via tRNA-based rather than protein-based catalysis; rejects L-amino acids rather than detecting D-amino acids in the active site. By recycling D-aminoacyl-tRNA to D-amino acids and free tRNA molecules, this enzyme counteracts the toxicity associated with the formation of D-aminoacyl-tRNA entities in vivo and helps enforce protein L-homochirality. In Parabacteroides distasonis (strain ATCC 8503 / DSM 20701 / CIP 104284 / JCM 5825 / NCTC 11152), this protein is D-aminoacyl-tRNA deacylase.